Consider the following 244-residue polypeptide: Small ribosomal subunit protein uS3 (244 aa).

Residues 39–107 form the KH type-2 domain; that stretch reads IRELIKKESF…KLIINVEEIK (69 aa). Residues 216 to 244 form a disordered region; sequence LPVYKNKKNDKNKKRRNNNRKGKSQAAKN. Residues 220–238 are compositionally biased toward basic residues; it reads KNKKNDKNKKRRNNNRKGK.

The protein belongs to the universal ribosomal protein uS3 family. As to quaternary structure, part of the 30S ribosomal subunit. Forms a tight complex with proteins S10 and S14.

Functionally, binds the lower part of the 30S subunit head. Binds mRNA in the 70S ribosome, positioning it for translation. In Finegoldia magna (strain ATCC 29328 / DSM 20472 / WAL 2508) (Peptostreptococcus magnus), this protein is Small ribosomal subunit protein uS3.